We begin with the raw amino-acid sequence, 143 residues long: Hemoglobin subunit alpha-1 (143 aa).

An N-acetylserine modification is found at Ser-2. A Globin domain is found at 2–143 (SLTAKDKDTV…LSRALAEKYR (142 aa)). O2 is bound at residue His-60. His-89 contacts heme b.

This sequence belongs to the globin family. In terms of assembly, hb1 is a heterotetramer of two alpha-1 chains and two beta-1 chains. As to expression, red blood cells.

Involved in oxygen transport from gills to the various peripheral tissues. The chain is Hemoglobin subunit alpha-1 (hba1) from Anarhichas minor (Arctic spotted wolffish).